Reading from the N-terminus, the 118-residue chain is uncharacterized protein (118 aa).

2 consecutive transmembrane segments (helical) span residues 7 to 27 and 34 to 58; these read VIVKCEFFCIFTFIFGCFIIE and VFVACCTIIKMGRCNMCIFITAIIF.

It localises to the membrane. This is an uncharacterized protein from Saccharomyces cerevisiae (strain ATCC 204508 / S288c) (Baker's yeast).